An 809-amino-acid chain; its full sequence is Plasminogen (809 aa).

The signal sequence occupies residues 1 to 19 (MDHKEVVLLLLLFLKSGLG). The PAN domain maps to 20–98 (DSLDDYVNTQ…RDVVLFEKRI (79 aa)). 24 disulfide bridges follow: C49/C73, C53/C61, C103/C181, C124/C164, C152/C176, C185/C262, C188/C316, C206/C245, C234/C257, C275/C352, C296/C335, C324/C347, C377/C454, C398/C437, C426/C449, C480/C559, C501/C542, C530/C554, C566/C684, C576/C584, C606/C622, C698/C765, C728/C744, and C755/C783. Kringle domains lie at 103 to 181 (CKTG…IPEC) and 185 to 262 (CMHC…IPRC). An O-linked (GalNAc...) threonine glycan is attached at T268. Kringle domains are found at residues 275-352 (CLKG…IPSC), 377-454 (CYRG…LKKC), and 480-559 (CMFG…VPQC). Residue N308 is glycosylated (N-linked (GlcNAc...) asparagine). One can recognise a Peptidase S1 domain in the interval 580–807 (VVGGCVSIPH…FVTWIEEIMR (228 aa)). The residue at position 596 (S596) is a Phosphoserine. Residues H621 and D664 each act as charge relay system in the active site. Residue S759 is the Charge relay system of the active site.

It belongs to the peptidase S1 family. Plasminogen subfamily. Interacts with CSPG4 and AMOT. Interacts (via the Kringle domains) with HRG; the interaction tethers PLG to the cell surface and enhances its activation. Interacts (via Kringle 4 domain) with ADA; the interaction stimulates PLG activation when in complex with DPP4. Angiostatin: Interacts with ATP5F1A; the interaction inhibits most of the angiogenic effects of angiostatin. In terms of processing, N-linked glycan contains N-acetyllactosamine, sialic acid and is core fucosylated. O-linked glycans consist of Gal-GalNAc disaccharide which is modified with up to 2 sialic acid residues (microheterogeneity). Post-translationally, in the presence of the inhibitor, the activation involves only cleavage after Arg-579, yielding two chains held together by two disulfide bonds. In the absence of the inhibitor, the activation involves additionally the removal of the activation peptide.

The protein localises to the secreted. It carries out the reaction Preferential cleavage: Lys-|-Xaa &gt; Arg-|-Xaa, higher selectivity than trypsin. Converts fibrin into soluble products.. With respect to regulation, converted into plasmin by plasminogen activators, both plasminogen and its activator being bound to fibrin. Cannot be activated with streptokinase. Its function is as follows. Plasmin dissolves the fibrin of blood clots and acts as a proteolytic factor in a variety of other processes including embryonic development, tissue remodeling, tumor invasion, and inflammation. In ovulation, weakens the walls of the Graafian follicle. It activates the urokinase-type plasminogen activator, collagenases and several complement zymogens, such as C1, C4 and C5. Cleavage of fibronectin and laminin leads to cell detachment and apoptosis. Also cleaves fibrin, thrombospondin and von Willebrand factor. Its role in tissue remodeling and tumor invasion may be modulated by CSPG4. Binds to cells. This Sus scrofa (Pig) protein is Plasminogen (PLG).